A 487-amino-acid polypeptide reads, in one-letter code: N-succinylglutamate 5-semialdehyde dehydrogenase (487 aa).

Residues 1-23 (MTHFIKGQWHTGKGHDVASSNPA) are disordered. NAD(+) is bound at residue 220–225 (GSSRTG). Active-site residues include Glu243 and Cys277.

This sequence belongs to the aldehyde dehydrogenase family. AstD subfamily.

The enzyme catalyses N-succinyl-L-glutamate 5-semialdehyde + NAD(+) + H2O = N-succinyl-L-glutamate + NADH + 2 H(+). The protein operates within amino-acid degradation; L-arginine degradation via AST pathway; L-glutamate and succinate from L-arginine: step 4/5. Catalyzes the NAD-dependent reduction of succinylglutamate semialdehyde into succinylglutamate. The polypeptide is N-succinylglutamate 5-semialdehyde dehydrogenase (Shewanella oneidensis (strain ATCC 700550 / JCM 31522 / CIP 106686 / LMG 19005 / NCIMB 14063 / MR-1)).